A 75-amino-acid polypeptide reads, in one-letter code: Probable pilin MJ1469 (75 aa).

Residues methionine 1–alanine 11 constitute a propeptide that is removed on maturation. The QXSXEXXXL motif lies at glutamine 12–leucine 20.

The N-terminus is cleaved by the prepilin peptidase EppA, which recognizes the class III signal sequence.

Its subcellular location is the secreted. It localises to the cell surface. It is found in the fimbrium. In Methanocaldococcus jannaschii (strain ATCC 43067 / DSM 2661 / JAL-1 / JCM 10045 / NBRC 100440) (Methanococcus jannaschii), this protein is Probable pilin MJ1469.